The sequence spans 256 residues: Probable galactose dehydrogenase GalD (256 aa).

NAD(+) is bound by residues 20-23 (GGGS), 71-72 (DL), and Asn98. Ser150 contributes to the substrate binding site. The active-site Proton acceptor is Tyr163. Residues 163–167 (YSTAK) and Ile196 each bind NAD(+).

It belongs to the short-chain dehydrogenases/reductases (SDR) family.

Its function is as follows. Involved in the degradation of galactose via the DeLey-Doudoroff pathway. Catalyzes the oxidation of galactose in the presence of NAD(+). Uses NAD(+) as a hydrogen acceptor more efficiently than NADP(+). The protein is Probable galactose dehydrogenase GalD (galD) of Rhizobium meliloti (strain 1021) (Ensifer meliloti).